Consider the following 161-residue polypeptide: Nucleotide-binding protein ABO_0048 (161 aa).

The protein belongs to the YajQ family.

Functionally, nucleotide-binding protein. In Alcanivorax borkumensis (strain ATCC 700651 / DSM 11573 / NCIMB 13689 / SK2), this protein is Nucleotide-binding protein ABO_0048.